We begin with the raw amino-acid sequence, 1886 residues long: Polyprotein P3 (1886 aa).

Disordered regions lie at residues 1–24, 420–466, and 478–529; these read MATRRLPAVTQTDGSRTATESGVP, RCDS…MQDD, and RMKK…NQPE. Over residues 9–20 the composition is skewed to polar residues; the sequence is VTQTDGSRTATE. Residues 488–498 show a composition bias toward low complexity; the sequence is QQALSSQAQEE. The segment at 879–896 adopts a CCHC-type zinc-finger fold; sequence CKCYICGQEGHYANQCRN. Residues 1215–1292 form the Peptidase A2 domain; sequence INAIVDTGAT…GLSPGIQMII (78 aa). The active-site For protease activity is D1220. The Reverse transcriptase domain occupies 1425 to 1615; that stretch reads LLQMKVIRPS…PEIDFLGASL (191 aa). The region spanning 1706-1841 is the RNase H type-1 domain; the sequence is KDSFIIIETD…ADALSRMINF (136 aa). Mg(2+) is bound by residues D1715, E1758, D1784, and D1833.

Post-translationally, polyprotein P3 is presumably proteolytically cleaved into several chains by viral protease.

It catalyses the reaction Endonucleolytic cleavage to 5'-phosphomonoester.. The catalysed reaction is DNA(n) + a 2'-deoxyribonucleoside 5'-triphosphate = DNA(n+1) + diphosphate. Capsid protein self assembles to form a bacilliform capsid about 90-900 nm in length. The capsid encapsulates the genomic dsDNA. Following virus entry into host cell, provides nuclear import of the viral genome. Virus particles do not enter the nucleus, but are targeted to the nuclear membrane through the interaction with host importins. The sequence is that of Polyprotein P3 from Commelina yellow mottle virus (CoYMV).